The chain runs to 341 residues: LIM and senescent cell antigen-like-containing domain protein 2 (341 aa).

LIM zinc-binding domains follow at residues 13–74, 76–133, 138–195, 196–255, and 256–315; these read AMCQ…LFAP, CGFC…EKAK, FICQ…KMGI, PICG…LFGD, and VCYN…FPLE. Phosphoserine is present on S328.

In terms of assembly, interacts with integrin-linked protein kinase 1 (ILK) via the first LIM domain, and in competition with LIMS1. Part of the heterotrimeric IPP complex composed of integrin-linked kinase (ILK), LIMS1 or LIMS2, and PARVA. Interacts with TGFB1I1. As to expression, detected in heart, lung, kidney, liver, urinary bladder, fat, skin, skeletal muscle, uterus, large intestine and testis.

It localises to the cell junction. Its subcellular location is the focal adhesion. It is found in the cell membrane. Adapter protein in a cytoplasmic complex linking beta-integrins to the actin cytoskeleton, bridges the complex to cell surface receptor tyrosine kinases and growth factor receptors. This is LIM and senescent cell antigen-like-containing domain protein 2 (Lims2) from Mus musculus (Mouse).